Here is a 180-residue protein sequence, read N- to C-terminus: Shikimate kinase (180 aa).

14–19 (GAGKTC) serves as a coordination point for ATP. Threonine 18 serves as a coordination point for Mg(2+). Substrate contacts are provided by aspartate 36, arginine 60, and glycine 82. Arginine 120 contacts ATP. Arginine 139 is a substrate binding site.

It belongs to the shikimate kinase family. In terms of assembly, monomer. Mg(2+) is required as a cofactor.

Its subcellular location is the cytoplasm. The enzyme catalyses shikimate + ATP = 3-phosphoshikimate + ADP + H(+). It functions in the pathway metabolic intermediate biosynthesis; chorismate biosynthesis; chorismate from D-erythrose 4-phosphate and phosphoenolpyruvate: step 5/7. In terms of biological role, catalyzes the specific phosphorylation of the 3-hydroxyl group of shikimic acid using ATP as a cosubstrate. The chain is Shikimate kinase from Stenotrophomonas maltophilia (strain K279a).